We begin with the raw amino-acid sequence, 405 residues long: MAGVLGMILAGGEGSRLRPLTESRSKPSVPFGGSYRLIDFALNNFVNADLMRIYVLTQFKSQSLFHHLKKGWNINGITDRFIDPIPAQMRTGKRWYEGTADAIYQNLRFMELEEPDQVCIFGSDHIYKMDIKQMLNFHTEKKASLTVSALRMPLKEASQFGVIEVDAEGRMIGFEEKPANPKSIPGEPDFALVSMGNYVFEAQVLFSELVEDADNEASSHDFGKDIIPKMFPRGDVFVYDFSTNRISGEKEEVYWRDVGTIDAYWQAHMDLLEKDAPFSLYNRKWPLHTYYPPLPPATFTDSDNGRVQIIDSLVCNGSYVRGSRIEKSVLGFRSNIASACDISECILLGDVKIGEGCVLRRVIVDKDADIAPGTQIGVNLQEDKKHFHVSEEGIVVIPKGARVGY.

Residues Tyr96, Gly161, 176–177 (EK), and Ser194 each bind alpha-D-glucose 1-phosphate.

Belongs to the bacterial/plant glucose-1-phosphate adenylyltransferase family. As to quaternary structure, homotetramer.

The enzyme catalyses alpha-D-glucose 1-phosphate + ATP + H(+) = ADP-alpha-D-glucose + diphosphate. The protein operates within glycan biosynthesis; glycogen biosynthesis. In terms of biological role, involved in the biosynthesis of ADP-glucose, a building block required for the elongation reactions to produce glycogen. Catalyzes the reaction between ATP and alpha-D-glucose 1-phosphate (G1P) to produce pyrophosphate and ADP-Glc. In Vibrio parahaemolyticus serotype O3:K6 (strain RIMD 2210633), this protein is Glucose-1-phosphate adenylyltransferase 1.